The following is a 478-amino-acid chain: Endoplasmic reticulum oxidoreductin-1 (478 aa).

The N-terminal stretch at 1-20 (MREPLLQLIVLSLIIIVVNT) is a signal peptide. 6 cysteine pairs are disulfide-bonded: C28/C41, C30/C39, C79/C384, C88/C93, C209/C230, and C387/C390. The tract at residues 117-143 (AAVKEEEDDDAEKCADAGNNIDPMDRT) is disordered. FAD-binding residues include R188, T190, and W201. The FAD site is built by S241, H244, R283, and R295. Residue N377 is glycosylated (N-linked (GlcNAc...) asparagine). The tract at residues 459–478 (ESVMNTAADGPPRKSNKIDL) is disordered.

Belongs to the EROs family. As to quaternary structure, may function both as a monomer and a homodimer. The cofactor is FAD.

It localises to the endoplasmic reticulum membrane. Functionally, oxidoreductase involved in disulfide bond formation in the endoplasmic reticulum. Efficiently reoxidizes pdi-1, the enzyme catalyzing protein disulfide formation, in order to allow pdi-1 to sustain additional rounds of disulfide formation. Following pdi reoxidation, passes its electrons to molecular oxygen via FAD, leading to the production of reactive oxygen species (ROS) in the cell. The sequence is that of Endoplasmic reticulum oxidoreductin-1 (ero-1) from Caenorhabditis elegans.